The sequence spans 429 residues: Multifunctional CCA protein (429 aa).

ATP contacts are provided by G27 and R30. Positions 27 and 30 each coordinate CTP. Mg(2+) is bound by residues D40 and D42. R110, R162, and R165 together coordinate ATP. Residues R110, R162, and R165 each contribute to the CTP site. In terms of domain architecture, HD spans T251–L352.

Belongs to the tRNA nucleotidyltransferase/poly(A) polymerase family. Bacterial CCA-adding enzyme type 1 subfamily. As to quaternary structure, monomer. Can also form homodimers and oligomers. Requires Mg(2+) as cofactor. It depends on Ni(2+) as a cofactor.

The catalysed reaction is a tRNA precursor + 2 CTP + ATP = a tRNA with a 3' CCA end + 3 diphosphate. The enzyme catalyses a tRNA with a 3' CCA end + 2 CTP + ATP = a tRNA with a 3' CCACCA end + 3 diphosphate. Its function is as follows. Catalyzes the addition and repair of the essential 3'-terminal CCA sequence in tRNAs without using a nucleic acid template. Adds these three nucleotides in the order of C, C, and A to the tRNA nucleotide-73, using CTP and ATP as substrates and producing inorganic pyrophosphate. tRNA 3'-terminal CCA addition is required both for tRNA processing and repair. Also involved in tRNA surveillance by mediating tandem CCA addition to generate a CCACCA at the 3' terminus of unstable tRNAs. While stable tRNAs receive only 3'-terminal CCA, unstable tRNAs are marked with CCACCA and rapidly degraded. The polypeptide is Multifunctional CCA protein (Ralstonia nicotianae (strain ATCC BAA-1114 / GMI1000) (Ralstonia solanacearum)).